We begin with the raw amino-acid sequence, 1398 residues long: Protein timeless (1398 aa).

Residues 237-268 (VSTLQKLLSLWFEASLSESSEDNESNTSPPKQ) are necessary for normal circadian rhythm. 5 disordered regions span residues 254–300 (ESSE…GGMR), 322–452 (ARVP…QKFN), 478–555 (TKGK…LRRK), 1127–1147 (TASSPSRYHHTGPRNSLSSVS), and 1220–1239 (NHRTGPSGDPSDCIGSSSTT). Positions 273–290 (SSPMLTSDPTSDSSDNGS) are enriched in low complexity. Positions 291–300 (NGRGMGGGMR) are enriched in gly residues. The span at 338–355 (MTGNDSEQPGSPEQSQPA) shows a compositional bias: polar residues. Residues 365 to 375 (EDQRHRQLNEH) are compositionally biased toward basic and acidic residues. A compositionally biased stretch (acidic residues) spans 376-390 (GEEDEDEDEVEEEEY). Composition is skewed to polar residues over residues 400-421 (LNLTQQPADKVNNTTNPTSSAP), 440-452 (ASTSAHAQMQKFN), and 504-515 (QVENQESISTSS). The segment covering 522 to 531 (QGKPQHQKPP) has biased composition (low complexity). The short motif at 550-560 (KELRRKKLVKR) is the Nuclear localization signal element.

It belongs to the timeless family. Forms a heterodimer with period (PER); the complex then translocates into the nucleus. In terms of processing, phosphorylated with a circadian rhythmicity. Expressed in head, photoreceptors, lateral neurons and glial cells in the lamina and medulla of the optic lobes. Expression follows a light-dark cycle, levels show a significant decrease at the end of the night and then remain low throughout the light period (at protein level).

Its subcellular location is the nucleus. It is found in the cytoplasm. It localises to the perinuclear region. Its function is as follows. Required for the production of circadian rhythms. The biological cycle depends on the rhythmic formation and nuclear localization of the TIM-PER complex. Light induces the degradation of TIM, which promotes elimination of PER. Nuclear activity of the heterodimer coordinatively regulates PER and TIM transcription through a negative feedback loop. Behaves as a negative element in circadian transcriptional loop. Does not appear to bind DNA, suggesting indirect transcriptional inhibition. This Drosophila melanogaster (Fruit fly) protein is Protein timeless (tim).